Here is a 391-residue protein sequence, read N- to C-terminus: Succinate--CoA ligase [ADP-forming] subunit beta (391 aa).

Residues Lys9–Glu245 enclose the ATP-grasp domain. Residues Lys46, Gly53–Gly55, Glu99, Ala102, and Glu107 each bind ATP. Asn200 and Asp214 together coordinate Mg(2+). Substrate is bound by residues Asn265 and Gly322–Val324.

This sequence belongs to the succinate/malate CoA ligase beta subunit family. Heterotetramer of two alpha and two beta subunits. Mg(2+) serves as cofactor.

The enzyme catalyses succinate + ATP + CoA = succinyl-CoA + ADP + phosphate. It carries out the reaction GTP + succinate + CoA = succinyl-CoA + GDP + phosphate. The protein operates within carbohydrate metabolism; tricarboxylic acid cycle; succinate from succinyl-CoA (ligase route): step 1/1. Functionally, succinyl-CoA synthetase functions in the citric acid cycle (TCA), coupling the hydrolysis of succinyl-CoA to the synthesis of either ATP or GTP and thus represents the only step of substrate-level phosphorylation in the TCA. The beta subunit provides nucleotide specificity of the enzyme and binds the substrate succinate, while the binding sites for coenzyme A and phosphate are found in the alpha subunit. This is Succinate--CoA ligase [ADP-forming] subunit beta from Sulfurovum sp. (strain NBC37-1).